Consider the following 141-residue polypeptide: Hemoglobin subunit alpha-A (141 aa).

Residues 1–141 (VLSGSDKTNV…VGNVLTAKYR (141 aa)) form the Globin domain. H58 contacts O2. H87 is a heme b binding site.

The protein belongs to the globin family. In terms of assembly, heterotetramer of two alpha chains and two beta chains. In terms of tissue distribution, red blood cells.

Involved in oxygen transport from the lung to the various peripheral tissues. The polypeptide is Hemoglobin subunit alpha-A (HBAA) (Vultur gryphus (Andean condor)).